The following is a 66-amino-acid chain: Toxin Cll1 (66 aa).

In terms of domain architecture, LCN-type CS-alpha/beta spans Lys1–Ser66. Cystine bridges form between Cys12–Cys65, Cys16–Cys41, Cys25–Cys46, and Cys29–Cys48.

Belongs to the long (4 C-C) scorpion toxin superfamily. Sodium channel inhibitor family. Beta subfamily. As to expression, expressed by the venom gland.

The protein resides in the secreted. Its function is as follows. Beta toxin that binds site-4 of sodium channels (Nav) and reduces peak current (observed on Nav1.1/SCN1A, Nav1.2/SCN2A, Nav1.3/SCN3A, Nav1.4/SCN5A, Nav1.5/SCN4A, and Nav1.6/SCN8A (IC(50)=44.9 nM)), shifts the voltage of activation toward more negative potentials (observed on Nav1.6, Nav1.1 (weak), Nav1.2 (weak), and Nav1.7 (weak)), and induces resurgent currents at negative voltages following brief and strong depolarizations (observed on Nav1.6, Nav1.1 (weak), Nav1.2 (weak), and Nav1.4 (weak)). This toxin is only active on crustaceans. The chain is Toxin Cll1 from Centruroides limpidus (Mexican scorpion).